Here is a 483-residue protein sequence, read N- to C-terminus: Alginate biosynthesis protein AlgA (483 aa).

The protein belongs to the mannose-6-phosphate isomerase type 2 family. In terms of assembly, monomer. The cofactor is Co(2+).

The enzyme catalyses D-mannose 6-phosphate = D-fructose 6-phosphate. It catalyses the reaction alpha-D-mannose 1-phosphate + GTP + H(+) = GDP-alpha-D-mannose + diphosphate. It participates in nucleotide-sugar biosynthesis; GDP-alpha-D-mannose biosynthesis; GDP-alpha-D-mannose from alpha-D-mannose 1-phosphate (GTP route): step 1/1. It functions in the pathway nucleotide-sugar biosynthesis; GDP-alpha-D-mannose biosynthesis; alpha-D-mannose 1-phosphate from D-fructose 6-phosphate: step 1/2. Functionally, produces a precursor for alginate polymerization. The alginate layer provides a protective barrier against host immune defenses and antibiotics. The polypeptide is Alginate biosynthesis protein AlgA (algA) (Pseudomonas syringae pv. tomato (strain ATCC BAA-871 / DC3000)).